The following is a 101-amino-acid chain: Small ribosomal subunit protein uS14 (101 aa).

The protein belongs to the universal ribosomal protein uS14 family. As to quaternary structure, part of the 30S ribosomal subunit. Contacts proteins S3 and S10.

Binds 16S rRNA, required for the assembly of 30S particles and may also be responsible for determining the conformation of the 16S rRNA at the A site. The protein is Small ribosomal subunit protein uS14 of Brucella anthropi (strain ATCC 49188 / DSM 6882 / CCUG 24695 / JCM 21032 / LMG 3331 / NBRC 15819 / NCTC 12168 / Alc 37) (Ochrobactrum anthropi).